The primary structure comprises 192 residues: UPF0149 protein YE3397 (192 aa).

The protein belongs to the UPF0149 family.

The protein is UPF0149 protein YE3397 of Yersinia enterocolitica serotype O:8 / biotype 1B (strain NCTC 13174 / 8081).